A 283-amino-acid chain; its full sequence is Bifunctional protein FolD (283 aa).

NADP(+) is bound by residues 163-165, serine 188, and isoleucine 229; that span reads GRS.

This sequence belongs to the tetrahydrofolate dehydrogenase/cyclohydrolase family. In terms of assembly, homodimer.

The enzyme catalyses (6R)-5,10-methylene-5,6,7,8-tetrahydrofolate + NADP(+) = (6R)-5,10-methenyltetrahydrofolate + NADPH. The catalysed reaction is (6R)-5,10-methenyltetrahydrofolate + H2O = (6R)-10-formyltetrahydrofolate + H(+). It participates in one-carbon metabolism; tetrahydrofolate interconversion. Its function is as follows. Catalyzes the oxidation of 5,10-methylenetetrahydrofolate to 5,10-methenyltetrahydrofolate and then the hydrolysis of 5,10-methenyltetrahydrofolate to 10-formyltetrahydrofolate. The polypeptide is Bifunctional protein FolD (Latilactobacillus sakei subsp. sakei (strain 23K) (Lactobacillus sakei subsp. sakei)).